Consider the following 158-residue polypeptide: Cyclic pyranopterin monophosphate synthase (158 aa).

Substrate contacts are provided by residues 75–77 (LCH) and 113–114 (ME). D128 is an active-site residue.

This sequence belongs to the MoaC family. In terms of assembly, homohexamer; trimer of dimers.

It carries out the reaction (8S)-3',8-cyclo-7,8-dihydroguanosine 5'-triphosphate = cyclic pyranopterin phosphate + diphosphate. It functions in the pathway cofactor biosynthesis; molybdopterin biosynthesis. Its function is as follows. Catalyzes the conversion of (8S)-3',8-cyclo-7,8-dihydroguanosine 5'-triphosphate to cyclic pyranopterin monophosphate (cPMP). In Polynucleobacter asymbioticus (strain DSM 18221 / CIP 109841 / QLW-P1DMWA-1) (Polynucleobacter necessarius subsp. asymbioticus), this protein is Cyclic pyranopterin monophosphate synthase.